Here is a 59-residue protein sequence, read N- to C-terminus: Small ribosomal subunit protein bS21 (59 aa).

It belongs to the bacterial ribosomal protein bS21 family.

This Acaryochloris marina (strain MBIC 11017) protein is Small ribosomal subunit protein bS21.